The following is a 205-amino-acid chain: Small ribosomal subunit protein uS4 (205 aa).

The span at 1-16 (MSKRESSKYKIDRRMG) shows a compositional bias: basic and acidic residues. Residues 1–46 (MSKRESSKYKIDRRMGENIWGRPKSPVNRREYGPGQHGQRRKGKLS) are disordered. Residues 94–157 (SRLDAIVYRA…KQLVIVLEAV (64 aa)) enclose the S4 RNA-binding domain.

Belongs to the universal ribosomal protein uS4 family. As to quaternary structure, part of the 30S ribosomal subunit. Contacts protein S5. The interaction surface between S4 and S5 is involved in control of translational fidelity.

One of the primary rRNA binding proteins, it binds directly to 16S rRNA where it nucleates assembly of the body of the 30S subunit. In terms of biological role, with S5 and S12 plays an important role in translational accuracy. In Rhizobium leguminosarum bv. trifolii (strain WSM2304), this protein is Small ribosomal subunit protein uS4.